A 210-amino-acid polypeptide reads, in one-letter code: Large ribosomal subunit protein bL25 (210 aa).

The tract at residues 185–210 (APEPAGQPEVPPEPAEEAKAKTIEKE) is disordered. Positions 200 to 210 (EEAKAKTIEKE) are enriched in basic and acidic residues.

This sequence belongs to the bacterial ribosomal protein bL25 family. CTC subfamily. Part of the 50S ribosomal subunit; part of the 5S rRNA/L5/L18/L25 subcomplex. Contacts the 5S rRNA. Binds to the 5S rRNA independently of L5 and L18.

Functionally, this is one of the proteins that binds to the 5S RNA in the ribosome where it forms part of the central protuberance. This chain is Large ribosomal subunit protein bL25, found in Desulforamulus reducens (strain ATCC BAA-1160 / DSM 100696 / MI-1) (Desulfotomaculum reducens).